The chain runs to 316 residues: Cuticle collagen 13 (316 aa).

The N-terminal stretch at 1–36 (MSEDLKQIAQETESLRKVAFFGIAVSTIATLTAIIA) is a signal peptide. Low complexity-rich tracts occupy residues 127-157 (SGAAGPAGSPGQDGAPGNDGAPGAPGNPGQD) and 183-204 (APGQKGPSGAPGAPGQSGGAAL). Residues 127-316 (SGAAGPAGSP…CPPPRTAPGY (190 aa)) form a disordered region. Triple-helical region regions lie at residues 128 to 157 (GAAGPAGSPGQDGAPGNDGAPGAPGNPGQD), 176 to 202 (GPPGPSGAPGQKGPSGAPGAPGQSGGA), 206 to 235 (GPPGPAGPPGPAGQPGSNGNAGAPGAPGQV), 240 to 266 (GTPGPAGPPGSPGPAGAPGQPGQAGSS), and 269 to 304 (GGPGPQGDAGAPGAPGAPGQAGAPGQDGESGSEGAC). Residues 205-217 (PGPPGPAGPPGPA) show a composition bias toward pro residues. Over residues 219–234 (QPGSNGNAGAPGAPGQ) the composition is skewed to low complexity. A compositionally biased stretch (pro residues) spans 241 to 251 (TPGPAGPPGSP). Low complexity-rich tracts occupy residues 256-266 (APGQPGQAGSS) and 276-295 (DAGAPGAPGAPGQAGAPGQD). The span at 307 to 316 (CPPPRTAPGY) shows a compositional bias: pro residues.

It belongs to the cuticular collagen family. In terms of assembly, collagen polypeptide chains are complexed within the cuticle by disulfide bonds and other types of covalent cross-links.

Its function is as follows. Nematode cuticles are composed largely of collagen-like proteins. The cuticle functions both as an exoskeleton and as a barrier to protect the worm from its environment. The polypeptide is Cuticle collagen 13 (col-13) (Caenorhabditis elegans).